Reading from the N-terminus, the 609-residue chain is Glutamine--fructose-6-phosphate aminotransferase [isomerizing] (609 aa).

Residue C2 is the Nucleophile; for GATase activity of the active site. In terms of domain architecture, Glutamine amidotransferase type-2 spans 2 to 218 (CGIVGAIAQR…EGDIAEITRR (217 aa)). SIS domains lie at 286–426 (ADDL…LKGL) and 458–599 (LAED…VDQP). The For Fru-6P isomerization activity role is filled by K604.

In terms of assembly, homodimer.

The protein resides in the cytoplasm. The enzyme catalyses D-fructose 6-phosphate + L-glutamine = D-glucosamine 6-phosphate + L-glutamate. In terms of biological role, catalyzes the first step in hexosamine metabolism, converting fructose-6P into glucosamine-6P using glutamine as a nitrogen source. The polypeptide is Glutamine--fructose-6-phosphate aminotransferase [isomerizing] (Salmonella typhi).